Consider the following 194-residue polypeptide: UPF0301 protein CBU_2093 (194 aa).

Belongs to the UPF0301 (AlgH) family.

The polypeptide is UPF0301 protein CBU_2093 (Coxiella burnetii (strain RSA 493 / Nine Mile phase I)).